Reading from the N-terminus, the 104-residue chain is Large ribosomal subunit protein bL21 (104 aa).

This sequence belongs to the bacterial ribosomal protein bL21 family. Part of the 50S ribosomal subunit. Contacts protein L20.

This protein binds to 23S rRNA in the presence of protein L20. This chain is Large ribosomal subunit protein bL21, found in Symbiobacterium thermophilum (strain DSM 24528 / JCM 14929 / IAM 14863 / T).